The primary structure comprises 487 residues: COP9 signalosome complex subunit 1 (487 aa).

Residues 103–123 (REVQNAPDAVPEGSMEPPALD) are disordered. Residues 265–427 (CFLLASFDHC…KILYARDVDQ (163 aa)) enclose the PCI domain. The tract at residues 461–487 (HVKSPPREGSQGELTPANSQSRLSTNM) is disordered. Residues 472–487 (GELTPANSQSRLSTNM) are compositionally biased toward polar residues.

This sequence belongs to the CSN1 family. Component of the CSN complex, probably composed of cops1, cops2, cops3, cops4, cops5, cops6, cops7, cops8 and cops9.

Its subcellular location is the cytoplasm. The protein localises to the nucleus. Functionally, essential component of the COP9 signalosome complex (CSN), a complex involved in various cellular and developmental processes. The CSN complex is an essential regulator of the ubiquitin (Ubl) conjugation pathway by mediating the deneddylation of the cullin subunits of E3 ligase complexes, leading to modify the Ubl ligase activity. The polypeptide is COP9 signalosome complex subunit 1 (csn1) (Xenopus laevis (African clawed frog)).